Reading from the N-terminus, the 431-residue chain is Histidine--tRNA ligase (431 aa).

This sequence belongs to the class-II aminoacyl-tRNA synthetase family.

The protein resides in the cytoplasm. The catalysed reaction is tRNA(His) + L-histidine + ATP = L-histidyl-tRNA(His) + AMP + diphosphate + H(+). The sequence is that of Histidine--tRNA ligase (hisS) from Pyrococcus abyssi (strain GE5 / Orsay).